The chain runs to 319 residues: tRNA-cytidine(32) 2-sulfurtransferase (319 aa).

A PP-loop motif motif is present at residues 43–48 (SGGKDS). 3 residues coordinate [4Fe-4S] cluster: Cys-118, Cys-121, and Cys-209.

The protein belongs to the TtcA family. In terms of assembly, homodimer. Mg(2+) is required as a cofactor. It depends on [4Fe-4S] cluster as a cofactor.

The protein resides in the cytoplasm. The enzyme catalyses cytidine(32) in tRNA + S-sulfanyl-L-cysteinyl-[cysteine desulfurase] + AH2 + ATP = 2-thiocytidine(32) in tRNA + L-cysteinyl-[cysteine desulfurase] + A + AMP + diphosphate + H(+). It functions in the pathway tRNA modification. Catalyzes the ATP-dependent 2-thiolation of cytidine in position 32 of tRNA, to form 2-thiocytidine (s(2)C32). The sulfur atoms are provided by the cysteine/cysteine desulfurase (IscS) system. The protein is tRNA-cytidine(32) 2-sulfurtransferase of Neisseria meningitidis serogroup A / serotype 4A (strain DSM 15465 / Z2491).